The sequence spans 383 residues: Lipid-A-disaccharide synthase (383 aa).

The protein belongs to the LpxB family.

The catalysed reaction is a lipid X + a UDP-2-N,3-O-bis[(3R)-3-hydroxyacyl]-alpha-D-glucosamine = a lipid A disaccharide + UDP + H(+). Its pathway is bacterial outer membrane biogenesis; LPS lipid A biosynthesis. Functionally, condensation of UDP-2,3-diacylglucosamine and 2,3-diacylglucosamine-1-phosphate to form lipid A disaccharide, a precursor of lipid A, a phosphorylated glycolipid that anchors the lipopolysaccharide to the outer membrane of the cell. The sequence is that of Lipid-A-disaccharide synthase from Syntrophus aciditrophicus (strain SB).